A 352-amino-acid polypeptide reads, in one-letter code: N-acetyl-gamma-glutamyl-phosphate reductase (352 aa).

Residue cysteine 155 is part of the active site.

Belongs to the NAGSA dehydrogenase family. Type 1 subfamily.

Its subcellular location is the cytoplasm. It carries out the reaction N-acetyl-L-glutamate 5-semialdehyde + phosphate + NADP(+) = N-acetyl-L-glutamyl 5-phosphate + NADPH + H(+). It participates in amino-acid biosynthesis; L-arginine biosynthesis; N(2)-acetyl-L-ornithine from L-glutamate: step 3/4. Functionally, catalyzes the NADPH-dependent reduction of N-acetyl-5-glutamyl phosphate to yield N-acetyl-L-glutamate 5-semialdehyde. This chain is N-acetyl-gamma-glutamyl-phosphate reductase, found in Gloeothece citriformis (strain PCC 7424) (Cyanothece sp. (strain PCC 7424)).